Consider the following 235-residue polypeptide: Serine protease SplA (235 aa).

A signal peptide spans 1 to 35 (MNKNVMIKGLTALTILTSLGFAENISDQPHSIAKA). Active-site charge relay system residues include H74, D113, and S189.

The protein belongs to the peptidase S1B family.

It is found in the secreted. The sequence is that of Serine protease SplA (splA) from Staphylococcus aureus.